Reading from the N-terminus, the 83-residue chain is NAD(P)H-quinone oxidoreductase subunit L (83 aa).

Helical transmembrane passes span 18–38 and 53–73; these read IGGY…LLFF and FSVY…APFL.

Belongs to the complex I NdhL subunit family. As to quaternary structure, NDH-1 can be composed of about 15 different subunits; different subcomplexes with different compositions have been identified which probably have different functions.

Its subcellular location is the cellular thylakoid membrane. The enzyme catalyses a plastoquinone + NADH + (n+1) H(+)(in) = a plastoquinol + NAD(+) + n H(+)(out). It catalyses the reaction a plastoquinone + NADPH + (n+1) H(+)(in) = a plastoquinol + NADP(+) + n H(+)(out). Functionally, NDH-1 shuttles electrons from an unknown electron donor, via FMN and iron-sulfur (Fe-S) centers, to quinones in the respiratory and/or the photosynthetic chain. The immediate electron acceptor for the enzyme in this species is believed to be plastoquinone. Couples the redox reaction to proton translocation, and thus conserves the redox energy in a proton gradient. Cyanobacterial NDH-1 also plays a role in inorganic carbon-concentration. The protein is NAD(P)H-quinone oxidoreductase subunit L of Synechococcus sp. (strain CC9311).